We begin with the raw amino-acid sequence, 99 residues long: UPF0213 protein PC1_0597 (99 aa).

Residues 8 to 83 (PQWYLYILRT…KQLSKNQKER (76 aa)) form the GIY-YIG domain.

It belongs to the UPF0213 family.

This chain is UPF0213 protein PC1_0597, found in Pectobacterium carotovorum subsp. carotovorum (strain PC1).